Consider the following 262-residue polypeptide: ATP synthase subunit a (262 aa).

Helical transmembrane passes span 25–45 (NVHIDTLFFSVLAAIIFLAVF), 86–106 (VAPLALTIFCWVFIMNAIDLI), 130–150 (DISATLGMSLCVFALILFYTV), 204–226 (LIFILIAVMYSANAAIAALGIPL), and 240–260 (LQAFIFMMLTVVYLSIAYNKA).

Belongs to the ATPase A chain family. As to quaternary structure, F-type ATPases have 2 components, CF(1) - the catalytic core - and CF(0) - the membrane proton channel. CF(1) has five subunits: alpha(3), beta(3), gamma(1), delta(1), epsilon(1). CF(0) has three main subunits: a(1), b(2) and c(9-12). The alpha and beta chains form an alternating ring which encloses part of the gamma chain. CF(1) is attached to CF(0) by a central stalk formed by the gamma and epsilon chains, while a peripheral stalk is formed by the delta and b chains.

It localises to the cell inner membrane. In terms of biological role, key component of the proton channel; it plays a direct role in the translocation of protons across the membrane. This Mannheimia succiniciproducens (strain KCTC 0769BP / MBEL55E) protein is ATP synthase subunit a.